The chain runs to 125 residues: Small ribosomal subunit protein uS13 (125 aa).

Belongs to the universal ribosomal protein uS13 family. Part of the 30S ribosomal subunit. Forms a loose heterodimer with protein S19. Forms two bridges to the 50S subunit in the 70S ribosome.

In terms of biological role, located at the top of the head of the 30S subunit, it contacts several helices of the 16S rRNA. In the 70S ribosome it contacts the 23S rRNA (bridge B1a) and protein L5 of the 50S subunit (bridge B1b), connecting the 2 subunits; these bridges are implicated in subunit movement. Contacts the tRNAs in the A and P-sites. The sequence is that of Small ribosomal subunit protein uS13 from Rickettsia africae (strain ESF-5).